The sequence spans 149 residues: Transcriptional repressor NrdR (149 aa).

Residues 3 to 33 (CPFCSSEDTKVVDSRTTIDGSTKRRRECNNC) fold into a zinc finger. In terms of domain architecture, ATP-cone spans 48–138 (IYVVKKDNRR…VYKEFDDIKS (91 aa)).

Belongs to the NrdR family. Zn(2+) serves as cofactor.

Its function is as follows. Negatively regulates transcription of bacterial ribonucleotide reductase nrd genes and operons by binding to NrdR-boxes. This Fusobacterium nucleatum subsp. nucleatum (strain ATCC 25586 / DSM 15643 / BCRC 10681 / CIP 101130 / JCM 8532 / KCTC 2640 / LMG 13131 / VPI 4355) protein is Transcriptional repressor NrdR.